Reading from the N-terminus, the 308-residue chain is GMP synthase [glutamine-hydrolyzing] subunit B (308 aa).

Residues 1-185 (MDWGRFVEEK…LGLPEKIYNR (185 aa)) form the GMPS ATP-PPase domain. Position 28 to 34 (28 to 34 (SGGVDSS)) interacts with ATP.

As to quaternary structure, heterodimer composed of a glutamine amidotransferase subunit (A) and a GMP-binding subunit (B).

The enzyme catalyses XMP + L-glutamine + ATP + H2O = GMP + L-glutamate + AMP + diphosphate + 2 H(+). It functions in the pathway purine metabolism; GMP biosynthesis; GMP from XMP (L-Gln route): step 1/1. Functionally, catalyzes the synthesis of GMP from XMP. This chain is GMP synthase [glutamine-hydrolyzing] subunit B (guaAB), found in Pyrococcus horikoshii (strain ATCC 700860 / DSM 12428 / JCM 9974 / NBRC 100139 / OT-3).